Reading from the N-terminus, the 76-residue chain is Small ribosomal subunit protein bS18 (76 aa).

Belongs to the bacterial ribosomal protein bS18 family. In terms of assembly, part of the 30S ribosomal subunit. Forms a tight heterodimer with protein bS6.

In terms of biological role, binds as a heterodimer with protein bS6 to the central domain of the 16S rRNA, where it helps stabilize the platform of the 30S subunit. The protein is Small ribosomal subunit protein bS18 of Oceanobacillus iheyensis (strain DSM 14371 / CIP 107618 / JCM 11309 / KCTC 3954 / HTE831).